The primary structure comprises 409 residues: tRNA(Met) cytidine acetate ligase (409 aa).

Residues 7–20 (VVEY…HLYH), Gly102, Asn169, and Arg194 each bind ATP.

The protein belongs to the TmcAL family.

Its subcellular location is the cytoplasm. It carries out the reaction cytidine(34) in elongator tRNA(Met) + acetate + ATP = N(4)-acetylcytidine(34) in elongator tRNA(Met) + AMP + diphosphate. Catalyzes the formation of N(4)-acetylcytidine (ac(4)C) at the wobble position of elongator tRNA(Met), using acetate and ATP as substrates. First activates an acetate ion to form acetyladenylate (Ac-AMP) and then transfers the acetyl group to tRNA to form ac(4)C34. This Clostridium botulinum (strain ATCC 19397 / Type A) protein is tRNA(Met) cytidine acetate ligase.